A 748-amino-acid polypeptide reads, in one-letter code: Photosystem I P700 chlorophyll a apoprotein A1 (748 aa).

Transmembrane regions (helical) follow at residues 70–93 (VFSAHFGQLAVIFIWISGMYFHGA), 156–179 (LYTTAIGGLVMAGLMLFAGWFHYH), 195–219 (LNHHLAGLLGLGSLAWAGHQIHVSM), 291–309 (TAHHHLAIAVLFLIAGHMY), 346–369 (WHAQLSLNLAMLGSLTIIVAHHMY), 385–411 (LSLFTHHMWIGGFCIVGAAAHAAIFMV), 433–455 (AIISHLNWACIFLGFHSFGLYIH), and 530–548 (FLVHHIHAFTIHVTVLILL). [4Fe-4S] cluster-binding residues include C572 and C581. Transmembrane regions (helical) follow at residues 588–609 (HIFLGLFWMYNSLSIAIFHFSW) and 662–684 (LSAYGLIFLGAHFVWAFSLMFLF). Residue H673 coordinates chlorophyll a'. Residues M681 and Y689 each contribute to the chlorophyll a site. W690 serves as a coordination point for phylloquinone. A helical transmembrane segment spans residues 722 to 742 (AVGVAHYLLGGIATTWAFFLA).

Belongs to the PsaA/PsaB family. The PsaA/B heterodimer binds the P700 chlorophyll special pair and subsequent electron acceptors. PSI consists of a core antenna complex that captures photons, and an electron transfer chain that converts photonic excitation into a charge separation. The eukaryotic PSI reaction center is composed of at least 11 subunits. The cofactor is P700 is a chlorophyll a/chlorophyll a' dimer, A0 is one or more chlorophyll a, A1 is one or both phylloquinones and FX is a shared 4Fe-4S iron-sulfur center..

It localises to the plastid. It is found in the chloroplast thylakoid membrane. The catalysed reaction is reduced [plastocyanin] + hnu + oxidized [2Fe-2S]-[ferredoxin] = oxidized [plastocyanin] + reduced [2Fe-2S]-[ferredoxin]. Functionally, psaA and PsaB bind P700, the primary electron donor of photosystem I (PSI), as well as the electron acceptors A0, A1 and FX. PSI is a plastocyanin-ferredoxin oxidoreductase, converting photonic excitation into a charge separation, which transfers an electron from the donor P700 chlorophyll pair to the spectroscopically characterized acceptors A0, A1, FX, FA and FB in turn. Oxidized P700 is reduced on the lumenal side of the thylakoid membrane by plastocyanin. This is Photosystem I P700 chlorophyll a apoprotein A1 from Chara vulgaris (Common stonewort).